Reading from the N-terminus, the 276-residue chain is Pyrroline-5-carboxylate reductase (276 aa).

This sequence belongs to the pyrroline-5-carboxylate reductase family.

The protein resides in the cytoplasm. The catalysed reaction is L-proline + NADP(+) = (S)-1-pyrroline-5-carboxylate + NADPH + 2 H(+). The enzyme catalyses L-proline + NAD(+) = (S)-1-pyrroline-5-carboxylate + NADH + 2 H(+). It functions in the pathway amino-acid biosynthesis; L-proline biosynthesis; L-proline from L-glutamate 5-semialdehyde: step 1/1. This is Pyrroline-5-carboxylate reductase (PROC1) from Arabidopsis thaliana (Mouse-ear cress).